The following is a 185-amino-acid chain: Ribosome-recycling factor (185 aa).

It belongs to the RRF family.

It is found in the cytoplasm. Functionally, responsible for the release of ribosomes from messenger RNA at the termination of protein biosynthesis. May increase the efficiency of translation by recycling ribosomes from one round of translation to another. This chain is Ribosome-recycling factor, found in Bacillus anthracis (strain A0248).